A 378-amino-acid polypeptide reads, in one-letter code: Ribosomal RNA large subunit methyltransferase G (378 aa).

Belongs to the methyltransferase superfamily. RlmG family.

The protein localises to the cytoplasm. It carries out the reaction guanosine(1835) in 23S rRNA + S-adenosyl-L-methionine = N(2)-methylguanosine(1835) in 23S rRNA + S-adenosyl-L-homocysteine + H(+). Specifically methylates the guanine in position 1835 (m2G1835) of 23S rRNA. The protein is Ribosomal RNA large subunit methyltransferase G of Escherichia coli O9:H4 (strain HS).